The sequence spans 503 residues: ATP synthase subunit alpha (503 aa).

ATP is bound at residue 170-177 (GDRQTGKT).

This sequence belongs to the ATPase alpha/beta chains family. As to quaternary structure, F-type ATPases have 2 components, CF(1) - the catalytic core - and CF(0) - the membrane proton channel. CF(1) has five subunits: alpha(3), beta(3), gamma(1), delta(1), epsilon(1). CF(0) has three main subunits: a(1), b(2) and c(9-12). The alpha and beta chains form an alternating ring which encloses part of the gamma chain. CF(1) is attached to CF(0) by a central stalk formed by the gamma and epsilon chains, while a peripheral stalk is formed by the delta and b chains.

The protein resides in the cell membrane. It catalyses the reaction ATP + H2O + 4 H(+)(in) = ADP + phosphate + 5 H(+)(out). Functionally, produces ATP from ADP in the presence of a proton gradient across the membrane. The alpha chain is a regulatory subunit. This Brevibacillus brevis (strain 47 / JCM 6285 / NBRC 100599) protein is ATP synthase subunit alpha.